A 1396-amino-acid polypeptide reads, in one-letter code: DNA-directed RNA polymerase subunit beta' (1396 aa).

Positions 70, 72, 85, and 88 each coordinate Zn(2+). 3 residues coordinate Mg(2+): aspartate 460, aspartate 462, and aspartate 464. Positions 814, 888, 895, and 898 each coordinate Zn(2+).

Belongs to the RNA polymerase beta' chain family. As to quaternary structure, the RNAP catalytic core consists of 2 alpha, 1 beta, 1 beta' and 1 omega subunit. When a sigma factor is associated with the core the holoenzyme is formed, which can initiate transcription. Mg(2+) serves as cofactor. Requires Zn(2+) as cofactor.

The catalysed reaction is RNA(n) + a ribonucleoside 5'-triphosphate = RNA(n+1) + diphosphate. Its function is as follows. DNA-dependent RNA polymerase catalyzes the transcription of DNA into RNA using the four ribonucleoside triphosphates as substrates. The sequence is that of DNA-directed RNA polymerase subunit beta' from Chromobacterium violaceum (strain ATCC 12472 / DSM 30191 / JCM 1249 / CCUG 213 / NBRC 12614 / NCIMB 9131 / NCTC 9757 / MK).